The primary structure comprises 439 residues: MKFYWSQIYSWLLRTPYRSLERAYRASKKIQHIKKNYIFYNKNIISSSRRSWQAIMLYINTNLNNCVFIIYWSLLEYRISLFFFDFIKTFVLIISNFFNSFFSNLISNNVIKQDLKEIKQMNKKLAWIEASLNDLDMWKYYYSFSFFSKEKQKTVETSLTFVDLKKNNVTTAAYESIGLVPRSITRTLSGFKTELTGQSTSLVLQDFQIARYQALASLQYMLFLLFIPWGFSSLLKIWFLEPWLKNWWNTYQYQIFLNSFQEELALKRLQQIEELVWLDKIMVNSLKEPQSQDLNIEIHQKTIQLVKIYNENSLNTLLHLLTDIVYVITLSAVFILGKQRLAILNSWIQELFYSLSDTMKAFSILLLTDLCIGFHSPHGWEIVIGSFLEHLGFAHNKHIISCFVSTFPVILDTVFKYWIFRHLNRISPSIVATYHTMNE.

The next 6 membrane-spanning stretches (helical) occupy residues 55 to 75 (IMLYINTNLNNCVFIIYWSLL), 79 to 99 (ISLFFFDFIKTFVLIISNFFN), 220 to 240 (YMLFLLFIPWGFSSLLKIWFL), 317 to 337 (LLHLLTDIVYVITLSAVFILG), 364 to 384 (ILLLTDLCIGFHSPHGWEIVI), and 399 to 419 (IISCFVSTFPVILDTVFKYWI).

It belongs to the CemA family.

It localises to the plastid. Its subcellular location is the chloroplast inner membrane. The enzyme catalyses K(+)(in) + H(+)(out) = K(+)(out) + H(+)(in). In terms of biological role, contributes to K(+)/H(+) antiport activity by supporting proton efflux to control proton extrusion and homeostasis in chloroplasts in a light-dependent manner to modulate photosynthesis. Prevents excessive induction of non-photochemical quenching (NPQ) under continuous-light conditions. Indirectly promotes efficient inorganic carbon uptake into chloroplasts. This Physcomitrium patens (Spreading-leaved earth moss) protein is Potassium/proton antiporter CemA.